A 303-amino-acid polypeptide reads, in one-letter code: Plasmodesmata-located protein 1 (303 aa).

Residues 1–21 form the signal peptide; sequence MKLTYQFFIFWFFLPFFAISG. Residues 22–268 are Extracellular-facing; the sequence is DDDYKNLIFK…GEKRQHTERT (247 aa). Gnk2-homologous domains are found at residues 27-136 and 141-248; these read NLIF…SSGF and GTEM…YYSH. 6 disulfides stabilise this stretch: Cys33-Cys108, Cys84-Cys93, Cys96-Cys127, Cys149-Cys226, Cys202-Cys211, and Cys214-Cys239. The chain crosses the membrane as a helical span at residues 269 to 289; that stretch reads IALAVGGVFVLGFVIVCLLVL. The interval 269-289 is necessary and sufficient for plasmodesmal targeting; that stretch reads IALAVGGVFVLGFVIVCLLVL. Over 290–303 the chain is Cytoplasmic; sequence RSAMKKKSNKYDAY.

The protein belongs to the cysteine-rich repeat secretory protein family. Plasmodesmata-located proteins (PDLD) subfamily. Interacts with AZI1. Interacts with PDLP5. Does not interact with DIR1. As to quaternary structure, (Microbial infection) Interacts with Grapevine fanleaf virus (GFLV) 2B-MP. Interacts with Cauliflower mosaic virus (CaMV) movement protein. As to expression, highly expressed in cell suspension. Expressed in epidermal and spongy mesophyll cells, and the cell wall interface at the base of the leaf trichome (at protein level). Expressed in haustoria-containing cells.

The protein resides in the cell membrane. It localises to the cell junction. Its subcellular location is the plasmodesma. In terms of biological role, modulates cell-to-cell trafficking. Required for systemic acquired resistance (SAR) which is mediated by the signaling molecules azelaic acid (AzA), glycerol-3-phosphate (G3P), and salicylic acid (SA). Required for the proper localization and stability of AZI1 which is involved in SAR. Mediates callose deposition during downy mildew fungal infection around haustoria. Haustoria are unicellular protrusions from hyphae and function as the site of molecular exchange of nutrients and effectors between host and pathogen. In Arabidopsis thaliana (Mouse-ear cress), this protein is Plasmodesmata-located protein 1.